The primary structure comprises 863 residues: Alanine--tRNA ligase (863 aa).

Residues H552, H556, C654, and H658 each coordinate Zn(2+).

Belongs to the class-II aminoacyl-tRNA synthetase family. Requires Zn(2+) as cofactor.

It is found in the cytoplasm. It catalyses the reaction tRNA(Ala) + L-alanine + ATP = L-alanyl-tRNA(Ala) + AMP + diphosphate. Catalyzes the attachment of alanine to tRNA(Ala) in a two-step reaction: alanine is first activated by ATP to form Ala-AMP and then transferred to the acceptor end of tRNA(Ala). Also edits incorrectly charged Ser-tRNA(Ala) and Gly-tRNA(Ala) via its editing domain. The sequence is that of Alanine--tRNA ligase from Nitrosomonas eutropha (strain DSM 101675 / C91 / Nm57).